A 506-amino-acid polypeptide reads, in one-letter code: DEAD-box ATP-dependent RNA helicase CshA (506 aa).

The Q motif signature appears at 2 to 30; that stretch reads QNFKELGISDNTVQSLESMGFKEPTPIQK. Residues 33-203 form the Helicase ATP-binding domain; that stretch reads IPYALQGIDI…QQFMKSPKII (171 aa). 46–53 contributes to the ATP binding site; the sequence is AQTGTGKT. The short motif at 150 to 153 is the DEAD box element; it reads DEAD. The Helicase C-terminal domain occupies 214 to 375; it reads QIEEFYTIVK…LRPPHRKEVL (162 aa). The segment at 436–506 is disordered; the sequence is EKPLSRKGRN…KGRTFADHQK (71 aa). The segment covering 468 to 480 has biased composition (basic residues); it reads KRSKGYSSKKKST.

It belongs to the DEAD box helicase family. CshA subfamily. In terms of assembly, oligomerizes, may be a member of the RNA degradosome.

It localises to the cytoplasm. The catalysed reaction is ATP + H2O = ADP + phosphate + H(+). In terms of biological role, DEAD-box RNA helicase possibly involved in RNA degradation. Unwinds dsRNA in both 5'- and 3'-directions, has RNA-dependent ATPase activity. The protein is DEAD-box ATP-dependent RNA helicase CshA of Staphylococcus aureus (strain MRSA252).